The sequence spans 116 residues: Large ribosomal subunit protein bL19 (116 aa).

Belongs to the bacterial ribosomal protein bL19 family.

Functionally, this protein is located at the 30S-50S ribosomal subunit interface and may play a role in the structure and function of the aminoacyl-tRNA binding site. The protein is Large ribosomal subunit protein bL19 of Staphylococcus carnosus (strain TM300).